A 167-amino-acid polypeptide reads, in one-letter code: MAWSASVRGLGQRVLACSRELPGAWRTLHTSAVCAKNRAARVRVAKGNKPVSYEEAHAPHYIAHRKGWLSLHTGNLDGEDHAAERTLEDVFLRKFMMGTFPGCLADQIVLKRRANQVDICALVLRQLPAHKFYFLVGYSETLLSHFYKCPVRLHLQTVPSKVVYKYI.

The N-terminal 35 residues, 1-35 (MAWSASVRGLGQRVLACSRELPGAWRTLHTSAVCA), are a transit peptide targeting the mitochondrion.

This sequence belongs to the universal ribosomal protein uS3 family. Component of the mitochondrial ribosome small subunit (28S) which comprises a 12S rRNA and about 30 distinct proteins.

The protein localises to the mitochondrion. The polypeptide is Small ribosomal subunit protein uS3m (Mrps24) (Mus musculus (Mouse)).